The primary structure comprises 2131 residues: Beta/gamma crystallin domain-containing protein 1 (2131 aa).

Disordered stretches follow at residues 1–53, 104–370, 385–674, 688–707, and 723–743; these read MPLS…LPAP, KSRA…KGHA, TEGA…PVHK, RTNS…TPAS, and AKEM…NGVL. Positions 19 to 35 are enriched in basic residues; that stretch reads PPKKHTTFHLWRSKKKQ. The span at 135–147 shows a compositional bias: polar residues; it reads RNGLESPTRSNAK. Basic and acidic residues-rich tracts occupy residues 160-169 and 184-194; these read LPERESERSR and GSPRENPREAE. The segment covering 248–265 has biased composition (polar residues); the sequence is ATTTAKQLHSSPGNSSRQ. The segment covering 414–424 has biased composition (basic residues); the sequence is SGRRSGRRRGS. A compositionally biased stretch (low complexity) spans 479 to 490; it reads ASAASPESKPSP. Phosphoserine is present on residues S483 and S489. 2 stretches are compositionally biased toward basic and acidic residues: residues 536–546 and 562–572; these read PAKESPPKRVP and EAARAIPRELP. The span at 609-619 shows a compositional bias: low complexity; that stretch reads RAAGAPGASDA. Positions 723–733 are enriched in basic and acidic residues; the sequence is AKEMEQPEKKV. Phosphoserine is present on residues S737 and S756. Disordered stretches follow at residues 758–791 and 837–889; these read EEIL…DVQT and DIPT…KDTC. Polar residues predominate over residues 769-782; it reads GDSSENQALGPQPN. The span at 864–881 shows a compositional bias: low complexity; the sequence is SPAESSPGPSLSLSAPAP. S892 carries the post-translational modification Phosphoserine. Disordered regions lie at residues 926-947, 1041-1101, 1271-1302, and 1316-1348; these read LELG…AVGS, QAQS…VFDS, STSQ…EQSN, and SSST…SRSN. The residue at position 933 (T933) is a Phosphothreonine. Residues 1055 to 1089 show a composition bias toward polar residues; the sequence is SSPTNSPSSGNHLATPQRPDQTVTNGQDSPASLLN. 3 stretches are compositionally biased toward low complexity: residues 1091-1101, 1271-1288, and 1316-1327; these read SAGSDDSVFDS, STSQ…QPTT, and SSSTSHSSLKSP. Residues 1328–1348 show a composition bias toward basic and acidic residues; that stretch reads SHMEKYPQKEKTKEDLDSRSN. Beta/gamma crystallin 'Greek key' domains lie at 1430 to 1469, 1470 to 1525, 1531 to 1571, 1572 to 1614, 1626 to 1678, 1679 to 1721, 1727 to 1769, 1770 to 1812, 1823 to 1860, 1861 to 1904, 1910 to 1950, and 1951 to 1992; these read GKVV…KVVR, GCWI…RHVV, SHID…KVHW, GTWL…RPLK, PKVV…KVLR, GIWV…RPIL, AHMI…NVLS, GVWV…QPIC, NQIH…RVSG, GSWV…RFID, PTII…QVIG, and GIWV…RPFV. Residues 1994 to 2127 enclose the Ricin B-type lectin domain; that stretch reads KRIYFRLRNK…EKFTQVWEAM (134 aa).

This sequence belongs to the beta/gamma-crystallin family.

May function as suppressor of malignant melanoma. It may exert its effects through interactions with the cytoskeleton. The protein is Beta/gamma crystallin domain-containing protein 1 of Homo sapiens (Human).